A 238-amino-acid polypeptide reads, in one-letter code: tRNA1(Val) (adenine(37)-N6)-methyltransferase (238 aa).

This sequence belongs to the methyltransferase superfamily. tRNA (adenine-N(6)-)-methyltransferase family.

The protein resides in the cytoplasm. The catalysed reaction is adenosine(37) in tRNA1(Val) + S-adenosyl-L-methionine = N(6)-methyladenosine(37) in tRNA1(Val) + S-adenosyl-L-homocysteine + H(+). Specifically methylates the adenine in position 37 of tRNA(1)(Val) (anticodon cmo5UAC). This chain is tRNA1(Val) (adenine(37)-N6)-methyltransferase, found in Shewanella sp. (strain W3-18-1).